The following is a 579-amino-acid chain: Mitogen-activated protein kinase kinase kinase 7 (579 aa).

An interaction with MAPK8IP1 region spans residues Met1–Tyr300. The Protein kinase domain occupies Ile36 to Phe291. ATP contacts are provided by residues Val42 to Val50 and Lys63. Lys72 is covalently cross-linked (Glycyl lysine isopeptide (Lys-Gly) (interchain with G-Cter in ubiquitin)). The active-site Proton acceptor is Asp156. A Glycyl lysine isopeptide (Lys-Gly) (interchain with G-Cter in ubiquitin) cross-link involves residue Lys158. Phosphothreonine; by autocatalysis is present on residues Thr184 and Thr187. Ser192 carries the post-translational modification Phosphoserine; by autocatalysis. Lys209 is covalently cross-linked (Glycyl lysine isopeptide (Lys-Gly) (interchain with G-Cter in ubiquitin)). Disordered regions lie at residues Pro301–Pro339 and Lys354–Asp391. Positions Asp306–Ile322 are enriched in polar residues. Low complexity-rich tracts occupy residues Thr323–Asn334 and Ser361–Ser375. 3 positions are modified to phosphoserine: Ser367, Ser389, and Ser412. Over residues Leu416–Gln425 the composition is skewed to polar residues. Residues Leu416–Asp466 form a disordered region. Residues Val426 to Arg436 are compositionally biased toward low complexity. Phosphoserine is present on Ser428.

This sequence belongs to the protein kinase superfamily. STE Ser/Thr protein kinase family. MAP kinase kinase kinase subfamily. In terms of assembly, can form homodimer. Binds both upstream activators and downstream substrates in multimolecular complexes. Interacts with TAB1/MAP3K7IP1, TAB2/MAP3K7IP2 and TAB3/MAP3K7IP3. Identified in the TRIKA2 complex composed of MAP3K7/TAK1, TAB1/MAP3K7IP1 and TAB2/MAP3K7IP2. Interacts with PPM1L and PPM1B/PP2CB. Interaction with PP2A and PPP6C leads to its repressed activity. Interacts with TRAF6 and TAB1/MAP3K7IP1; during IL-1 signaling. Interacts with TAOK1 and TAOK2; interaction with TAOK2 interferes with MAP3K7 interaction with IKKA, thus preventing NF-kappa-B activation. Interacts with DYNC2I2 (via WD domains). Interacts with CYLD and RBCK1. Interacts with TGFBR1; induces MAP3K7/TAK1 activation by TRAF6. Interacts with MAPK8IP1 and SMAD6. Interacts with isoform 1 of VRK2. Interacts with DAB2; the interaction is induced by TGF-beta stimulation and may mediate TGF-beta stimulated JNK activation. Interacts with TRIM5. Part of a complex containing ITCH, NDFIP1 and MAP3K7. Interacts with IFIT5; the interaction synergizes the recruitment of IKK to MAP3K7 and enhances IKK phosphorylation. Interacts with PLEKHM1 (via N- and C-terminus). Found in a complex with SH3RF1, RAC2, MAP2K7/MKK7, MAPK8IP1/JIP1, MAPK8/JNK1 and MAPK9/JNK2. Interacts with SASH1. Interacts with RIPK1. Mg(2+) serves as cofactor. In terms of processing, association with TAB1/MAP3K7IP1 promotes autophosphorylation at Ser-192 and subsequent activation. Association with TAB2/MAP3K7IP2, itself associated with free unanchored Lys-63 polyubiquitin chain, promotes autophosphorylation and subsequent activation of MAP3K7. Dephosphorylation at Ser-192 by PPM1B/PP2CB and at Thr-187 by PP2A and PPP6C leads to inactivation. Post-translationally, 'Lys-48'-linked polyubiquitination at Lys-72 is induced by TNFalpha, and leads to proteasomal degradation. Undergoes 'Lys-48'-linked polyubiquitination catalyzed by ITCH. 'Lys-63'-linked polyubiquitination at Lys-158 by TRIM8 does not lead to proteasomal degradation but contributes to autophosphorylation and activation. Deubiquitinated by CYLD, a protease that selectively cleaves 'Lys-63'-linked ubiquitin chains. Deubiquitinated by USP19; leading to negative regulation of TNF-alpha- and IL-1beta-triggered NF-kappa-B activation.

The protein resides in the cytoplasm. The protein localises to the cell membrane. The catalysed reaction is L-seryl-[protein] + ATP = O-phospho-L-seryl-[protein] + ADP + H(+). It catalyses the reaction L-threonyl-[protein] + ATP = O-phospho-L-threonyl-[protein] + ADP + H(+). Activated by pro-inflammatory cytokines and in response to physical and chemical stresses, including osmotic stress, oxidative stress, arsenic and ultraviolet light irradiation. Activated by 'Lys-63'-linked polyubiquitination and by autophosphorylation. Association with TAB1/MAP3K7IP1 and TAB2/MAP3K7IP2 promotes activation through autophosphorylation, whereas PPM1B/PP2CB, PP2A and PPP6C dephosphorylation leads to inactivation. Ceramides are also able to activate MAP3K7/TAK1. Its function is as follows. Serine/threonine kinase which acts as an essential component of the MAP kinase signal transduction pathway. Plays an important role in the cascades of cellular responses evoked by changes in the environment. Mediates signal transduction of TRAF6, various cytokines including interleukin-1 (IL-1), transforming growth factor-beta (TGFB), TGFB-related factors like BMP2 and BMP4, toll-like receptors (TLR), tumor necrosis factor receptor CD40 and B-cell receptor (BCR). Once activated, acts as an upstream activator of the MKK/JNK signal transduction cascade and the p38 MAPK signal transduction cascade through the phosphorylation and activation of several MAP kinase kinases like MAP2K1/MEK1, MAP2K3/MKK3, MAP2K6/MKK6 and MAP2K7/MKK7. These MAP2Ks in turn activate p38 MAPKs and c-jun N-terminal kinases (JNKs); both p38 MAPK and JNK pathways control the transcription factors activator protein-1 (AP-1). Independently of MAP2Ks and p38 MAPKs, acts as a key activator of NF-kappa-B by promoting activation of the I-kappa-B-kinase (IKK) core complex. Mechanistically, recruited to polyubiquitin chains of RIPK2 and IKBKG/NEMO via TAB2/MAP3K7IP2 and TAB3/MAP3K7IP3, and catalyzes phosphorylation and activation of IKBKB/IKKB component of the IKK complex, leading to NF-kappa-B activation. In osmotic stress signaling, plays a major role in the activation of MAPK8/JNK1, but not that of NF-kappa-B. Promotes TRIM5 capsid-specific restriction activity. Phosphorylates RIPK1 at 'Ser-321' which positively regulates RIPK1 interaction with RIPK3 to promote necroptosis but negatively regulates RIPK1 kinase activity and its interaction with FADD to mediate apoptosis. Phosphorylates STING1 in response to cGAMP-activation, promoting association between STEEP1 and STING1 and STING1 translocation to COPII vesicles. This is Mitogen-activated protein kinase kinase kinase 7 (MAP3K7) from Bos taurus (Bovine).